We begin with the raw amino-acid sequence, 164 residues long: HTH-type transcriptional regulator PapX (164 aa).

Positions 25 to 159 (EHLLMQLCIR…FEVISKKLLA (135 aa)) constitute an HTH marR-type domain.

It is found in the cytoplasm. This is HTH-type transcriptional regulator PapX (papX) from Escherichia coli.